The sequence spans 262 residues: Probable lipoprotein EnvF (262 aa).

The signal sequence occupies residues 1-25 (MNKIHVTYKNLLLPITFIAATLISA). The N-palmitoyl cysteine moiety is linked to residue Cys26. The S-diacylglycerol cysteine moiety is linked to residue Cys26. The disordered stretch occupies residues 227-262 (EAEKAQQLVEQSRKDIESQRKKAAGKMNEIQQTFKK). The span at 237-246 (QSRKDIESQR) shows a compositional bias: basic and acidic residues.

It localises to the cell membrane. The protein is Probable lipoprotein EnvF (envF) of Salmonella typhimurium (strain LT2 / SGSC1412 / ATCC 700720).